A 219-amino-acid polypeptide reads, in one-letter code: Cytidylate kinase (219 aa).

11 to 19 (GPAGVGKTT) provides a ligand contact to ATP.

Belongs to the cytidylate kinase family. Type 1 subfamily.

It is found in the cytoplasm. It catalyses the reaction CMP + ATP = CDP + ADP. The enzyme catalyses dCMP + ATP = dCDP + ADP. This Oleidesulfovibrio alaskensis (strain ATCC BAA-1058 / DSM 17464 / G20) (Desulfovibrio alaskensis) protein is Cytidylate kinase.